The following is a 658-amino-acid chain: DNA mismatch repair protein MutL (658 aa).

Residues 114-130 (RQEDSSHATQVKAEDGK) are compositionally biased toward basic and acidic residues. Disordered stretches follow at residues 114 to 137 (RQEDSSHATQVKAEDGKLSSPTAA), 369 to 401 (DYPTGNKPDTRNAFGSSGKTAPMPYQSAYAPQQ), and 438 to 457 (FGNMPSETPAPKTDTPLSDG).

It belongs to the DNA mismatch repair MutL/HexB family.

Its function is as follows. This protein is involved in the repair of mismatches in DNA. It is required for dam-dependent methyl-directed DNA mismatch repair. May act as a 'molecular matchmaker', a protein that promotes the formation of a stable complex between two or more DNA-binding proteins in an ATP-dependent manner without itself being part of a final effector complex. The polypeptide is DNA mismatch repair protein MutL (Neisseria meningitidis serogroup A / serotype 4A (strain DSM 15465 / Z2491)).